We begin with the raw amino-acid sequence, 71 residues long: Prokaryotic ubiquitin-like protein Pup (71 aa).

The segment at 1-30 is disordered; the sequence is MPSASGHHQIPAETQRHDDDQTQETAQGLS. A coiled-coil region spans residues 23 to 56; the sequence is QETAQGLSAAAMLAQEQADDLDAILDDIETVLET. The interval 27–65 is ARC ATPase binding; sequence QGLSAAAMLAQEQADDLDAILDDIETVLETNAEEYVSSF. An Isoglutamyl lysine isopeptide (Glu-Lys) (interchain with K-? in acceptor proteins) cross-link involves residue E71.

This sequence belongs to the prokaryotic ubiquitin-like protein family. Strongly interacts with the proteasome-associated ATPase ARC through a hydrophobic interface; the interacting region of Pup lies in its C-terminal half. There is one Pup binding site per ARC hexamer ring.

The protein operates within protein degradation; proteasomal Pup-dependent pathway. Its function is as follows. Protein modifier that is covalently attached to lysine residues of substrate proteins, thereby targeting them for proteasomal degradation. The tagging system is termed pupylation. This is Prokaryotic ubiquitin-like protein Pup from Bifidobacterium animalis subsp. lactis (strain AD011).